The chain runs to 994 residues: Glycine dehydrogenase (decarboxylating) (994 aa).

The segment at M1–R20 is disordered. K716 is subject to N6-(pyridoxal phosphate)lysine.

Belongs to the GcvP family. As to quaternary structure, the glycine cleavage system is composed of four proteins: P, T, L and H. Pyridoxal 5'-phosphate serves as cofactor.

The enzyme catalyses N(6)-[(R)-lipoyl]-L-lysyl-[glycine-cleavage complex H protein] + glycine + H(+) = N(6)-[(R)-S(8)-aminomethyldihydrolipoyl]-L-lysyl-[glycine-cleavage complex H protein] + CO2. Functionally, the glycine cleavage system catalyzes the degradation of glycine. The P protein binds the alpha-amino group of glycine through its pyridoxal phosphate cofactor; CO(2) is released and the remaining methylamine moiety is then transferred to the lipoamide cofactor of the H protein. In Cutibacterium acnes (strain DSM 16379 / KPA171202) (Propionibacterium acnes), this protein is Glycine dehydrogenase (decarboxylating).